The chain runs to 392 residues: 8-amino-7-oxononanoate synthase (392 aa).

R26 serves as a coordination point for substrate. 113-114 (GY) contributes to the pyridoxal 5'-phosphate binding site. H138 contacts substrate. Residues S186, H214, and T241 each contribute to the pyridoxal 5'-phosphate site. K244 carries the post-translational modification N6-(pyridoxal phosphate)lysine. A substrate-binding site is contributed by T353.

Belongs to the class-II pyridoxal-phosphate-dependent aminotransferase family. BioF subfamily. Homodimer. Pyridoxal 5'-phosphate serves as cofactor.

The catalysed reaction is 6-carboxyhexanoyl-[ACP] + L-alanine + H(+) = (8S)-8-amino-7-oxononanoate + holo-[ACP] + CO2. It functions in the pathway cofactor biosynthesis; biotin biosynthesis. Functionally, catalyzes the decarboxylative condensation of pimeloyl-[acyl-carrier protein] and L-alanine to produce 8-amino-7-oxononanoate (AON), [acyl-carrier protein], and carbon dioxide. The protein is 8-amino-7-oxononanoate synthase of Maricaulis maris (strain MCS10) (Caulobacter maris).